A 121-amino-acid polypeptide reads, in one-letter code: UPF0738 protein RBAM_011600 (121 aa).

The protein belongs to the UPF0738 family.

The protein is UPF0738 protein RBAM_011600 of Bacillus velezensis (strain DSM 23117 / BGSC 10A6 / LMG 26770 / FZB42) (Bacillus amyloliquefaciens subsp. plantarum).